A 463-amino-acid chain; its full sequence is Heterogeneous nuclear ribonucleoprotein K (463 aa).

Methionine 1 is modified (N-acetylmethionine). The disordered stretch occupies residues 1–37 (METEQPEETFPNTETNGEFGKRPAEDMEEEQAFKRSR). A necessary for interaction with DDX1 region spans residues 1-276 (METEQPEETF…GRGGRPMPPS (276 aa)). Residues 19-37 (FGKRPAEDMEEEQAFKRSR) show a composition bias toward basic and acidic residues. An N6-acetyllysine; alternate modification is found at lysine 34. Lysine 34 participates in a covalent cross-link: Glycyl lysine isopeptide (Lys-Gly) (interchain with G-Cter in SUMO1); alternate. A Glycyl lysine isopeptide (Lys-Gly) (interchain with G-Cter in SUMO2); alternate cross-link involves residue lysine 34. Serine 36 carries the post-translational modification Phosphoserine. At threonine 39 the chain carries Phosphothreonine. Positions 42–104 (MVELRILLQS…ETIGEILKKI (63 aa)) constitute a KH 1 domain. Glycyl lysine isopeptide (Lys-Gly) (interchain with G-Cter in SUMO2) cross-links involve residues lysine 52 and lysine 60. 2 tandem repeats follow at residues 54–76 (AGAV…NASV) and 59–62 (GKGG). A 2 X 22 AA approximate repeats region spans residues 54–421 (AGAVIGKGGK…QIRHESGASI (368 aa)). The interval 59 to 407 (GKGGKNIKAL…LAGSIIGKGG (349 aa)) is 5 X 4 AA repeats of G-X-G-G. Phosphoserine is present on residues serine 75 and serine 116. One can recognise a KH 2 domain in the interval 144–209 (DCELRLLIHQ…DRVVECIKII (66 aa)). Lysine 163 is covalently cross-linked (Glycyl lysine isopeptide (Lys-Gly) (interchain with G-Cter in SUMO1); alternate). Residue lysine 163 forms a Glycyl lysine isopeptide (Lys-Gly) (interchain with G-Cter in SUMO2); alternate linkage. N6-acetyllysine is present on lysine 198. The interval 209 to 337 (ILDLISESPI…RPGDRYDGMV (129 aa)) is interaction with ZIK1. 2 positions are modified to phosphoserine: serine 214 and serine 216. A Glycyl lysine isopeptide (Lys-Gly) (interchain with G-Cter in SUMO2); alternate cross-link involves residue lysine 219. Lysine 219 is modified (N6-succinyllysine; alternate). Residues 236 to 273 (YGGFTMMFDDRRGRPVGFPMRGRGGFDRMPPGRGGRPM) are RNA-binding RGG-box. 3 consecutive repeat copies span residues 245–250 (DRRGRP), 257–260 (GRGG), and 267–270 (GRGG). The 2 X 6 AA repeats of D-R-R-G-R-P stretch occupies residues 245 to 329 (DRRGRPVGFP…LMAYDRRGRP (85 aa)). The segment at 250 to 329 (PVGFPMRGRG…LMAYDRRGRP (80 aa)) is disordered. Low complexity predominate over residues 252-266 (GFPMRGRGGFDRMPP). Basic and acidic residues predominate over residues 276 to 285 (SRRDYDDMSP). Residue serine 284 is modified to Phosphoserine. One copy of the 3-4 repeat lies at 295–298 (GRGG). Arginine 316 carries the post-translational modification Omega-N-methylarginine. The 2-2 repeat unit spans residues 324 to 329 (DRRGRP). At arginine 377 the chain carries Omega-N-methylarginine. Serine 379 carries the phosphoserine modification. Residue tyrosine 380 is modified to Phosphotyrosine. The KH 3 domain maps to 387 to 451 (IITTQVTIPK…DQIQNAQYLL (65 aa)). 2 consecutive repeat copies span residues 399–421 (AGSI…GASI) and 404–407 (GKGG). The residue at position 405 (lysine 405) is an N6-acetyllysine; alternate. A Glycyl lysine isopeptide (Lys-Gly) (interchain with G-Cter in SUMO2); alternate cross-link involves residue lysine 405. A Phosphoserine modification is found at serine 420. Lysine 422 participates in a covalent cross-link: Glycyl lysine isopeptide (Lys-Gly) (interchain with G-Cter in SUMO1); alternate. Lysine 422 participates in a covalent cross-link: Glycyl lysine isopeptide (Lys-Gly) (interchain with G-Cter in SUMO2); alternate. Lysine 422 is covalently cross-linked (Glycyl lysine isopeptide (Lys-Gly) (interchain with G-Cter in SUMO); alternate).

In terms of assembly, identified in the spliceosome C complex. Interacts with ANKRD28, RBM42 and ZIK1. Interacts with DDX1. Interacts with MDM2; this interaction leads to ubiquitination and proteasomal degradation. Interacts with p53/TP53. Interacts with BRDT. Interacts with IVNS1ABP. Interacts with PPIA/CYPA. Part of a transcription inhibitory ribonucleoprotein complex composed at least of the circular RNA circZNF827, ZNF827 and HNRNPL. In terms of processing, sumoylated by CBX4. Sumoylation is increased upon DNA damage, such as that produced by doxorubicin, etoposide, UV light and camptothecin, due to enhanced CBX4 phosphorylation by HIPK2 under these conditions. Ubiquitinated by MDM2. Doxorubicin treatment does not affect monoubiquitination, but slightly decreases HNRNPK poly-ubiquitination. Post-translationally, O-glycosylated (O-GlcNAcylated), in a cell cycle-dependent manner.

The protein resides in the cytoplasm. It is found in the nucleus. Its subcellular location is the nucleoplasm. The protein localises to the cell projection. It localises to the podosome. Its function is as follows. One of the major pre-mRNA-binding proteins. Binds tenaciously to poly(C) sequences. Likely to play a role in the nuclear metabolism of hnRNAs, particularly for pre-mRNAs that contain cytidine-rich sequences. Can also bind poly(C) single-stranded DNA. Plays an important role in p53/TP53 response to DNA damage, acting at the level of both transcription activation and repression. When sumoylated, acts as a transcriptional coactivator of p53/TP53, playing a role in p21/CDKN1A and 14-3-3 sigma/SFN induction. As far as transcription repression is concerned, acts by interacting with long intergenic RNA p21 (lincRNA-p21), a non-coding RNA induced by p53/TP53. This interaction is necessary for the induction of apoptosis, but not cell cycle arrest. As part of a ribonucleoprotein complex composed at least of ZNF827, HNRNPL and the circular RNA circZNF827 that nucleates the complex on chromatin, may negatively regulate the transcription of genes involved in neuronal differentiation. This Oryctolagus cuniculus (Rabbit) protein is Heterogeneous nuclear ribonucleoprotein K (HNRNPK).